We begin with the raw amino-acid sequence, 184 residues long: uncharacterized protein (184 aa).

Positions 1-20 are cleaved as a signal peptide; that stretch reads MYQLEKIWVLLCLALVGVLG.

This is an uncharacterized protein from Drosophila melanogaster (Fruit fly).